Reading from the N-terminus, the 41-residue chain is Submaxillary gland androgen-regulated protein 2, isoform beta (41 aa).

The first 22 residues, 1–22, serve as a signal peptide directing secretion; sequence MKALYMVFVLWVLIGCFLRLLK.

The protein localises to the secreted. In terms of biological role, may play a role in protection or detoxification. This is Submaxillary gland androgen-regulated protein 2, isoform beta (Smr2) from Mus musculus (Mouse).